We begin with the raw amino-acid sequence, 152 residues long: MAGEKTRKILVDNRKARFEYEILETYSAGLALLGTEVKAIRAGRANLNDAFARIHHGEVLLYNMNISPLQTAGAFAHDPLRTRKLLLKRREIHKLTGRVEEKGLTLIPLKLYLEGSWVKLDLGLARGKKLYDKREDIKKRETKRDIERAMRR.

This sequence belongs to the SmpB family.

The protein resides in the cytoplasm. Its function is as follows. Required for rescue of stalled ribosomes mediated by trans-translation. Binds to transfer-messenger RNA (tmRNA), required for stable association of tmRNA with ribosomes. tmRNA and SmpB together mimic tRNA shape, replacing the anticodon stem-loop with SmpB. tmRNA is encoded by the ssrA gene; the 2 termini fold to resemble tRNA(Ala) and it encodes a 'tag peptide', a short internal open reading frame. During trans-translation Ala-aminoacylated tmRNA acts like a tRNA, entering the A-site of stalled ribosomes, displacing the stalled mRNA. The ribosome then switches to translate the ORF on the tmRNA; the nascent peptide is terminated with the 'tag peptide' encoded by the tmRNA and targeted for degradation. The ribosome is freed to recommence translation, which seems to be the essential function of trans-translation. In Gloeobacter violaceus (strain ATCC 29082 / PCC 7421), this protein is SsrA-binding protein.